Consider the following 168-residue polypeptide: MSRSRINGNFIDKTSSIVANILLRIIPTTSGEKEAFTYYRDGMSAQSEGNYAEALQNYYEATRPEIDPYDRSYILYNIGLIHTSNGEHTKALEYYFRALERNPFLPQAFNNMAVICHYRGEQAIRQGDSEIAEAWSDQAAEYWKQAIALTPGNYIEAQNWLKITRRFE.

TPR repeat units follow at residues 35–68 (AFTYYRDGMSAQSEGNYAEALQNYYEATRPEIDP), 72–105 (SYILYNIGLIHTSNGEHTKALEYYFRALERNPFL), and 120–153 (GEQAIRQGDSEIAEAWSDQAAEYWKQAIALTPGN).

It belongs to the Ycf3 family.

The protein localises to the plastid. Its subcellular location is the chloroplast thylakoid membrane. Essential for the assembly of the photosystem I (PSI) complex. May act as a chaperone-like factor to guide the assembly of the PSI subunits. This Illicium oligandrum (Star anise) protein is Photosystem I assembly protein Ycf3.